Consider the following 159-residue polypeptide: SsrA-binding protein (159 aa).

The segment at 134–159 (KEHDKRDTERDRDWSRDKERLMKHNA) is disordered.

It belongs to the SmpB family.

The protein localises to the cytoplasm. Required for rescue of stalled ribosomes mediated by trans-translation. Binds to transfer-messenger RNA (tmRNA), required for stable association of tmRNA with ribosomes. tmRNA and SmpB together mimic tRNA shape, replacing the anticodon stem-loop with SmpB. tmRNA is encoded by the ssrA gene; the 2 termini fold to resemble tRNA(Ala) and it encodes a 'tag peptide', a short internal open reading frame. During trans-translation Ala-aminoacylated tmRNA acts like a tRNA, entering the A-site of stalled ribosomes, displacing the stalled mRNA. The ribosome then switches to translate the ORF on the tmRNA; the nascent peptide is terminated with the 'tag peptide' encoded by the tmRNA and targeted for degradation. The ribosome is freed to recommence translation, which seems to be the essential function of trans-translation. This is SsrA-binding protein from Marinomonas sp. (strain MWYL1).